The following is a 511-amino-acid chain: NADH-quinone oxidoreductase subunit N 1 (511 aa).

14 helical membrane-spanning segments follow: residues 15 to 35 (LALPMLVLSGFAVAILLLDLV), 46 to 66 (ALALAGLAAATMSLAKVWQAV), 89 to 109 (FAIYFYLLFIVGAAVAILMSI), 120 to 140 (GEYHALILFATIGMMCMASGM), 142 to 162 (LILLFVGLELMALSTYVLVGF), 177 to 197 (LLLGAFSSGIFAYGLSLFYGL), 221 to 241 (PIALLALITTATGLLFKIAAV), 264 to 284 (VAVKAAGWAMLLRIFLFMLWP), 289 to 309 (YTPILIFVAVATMIGGNFAAL), 317 to 337 (LLAYSSISHVGYMLLGLVASD), 347 to 367 (GILVYLAVYTFMNLGAFAVIT), 393 to 413 (AVLLLVFLLSLAGIPPLAGFW), 426 to 446 (GHYTLAVVAVLFAVLGMYYYL), and 471 to 491 (AALWISALGTLGIGLFPEVFL).

The protein belongs to the complex I subunit 2 family. NDH-1 is composed of 14 different subunits. Subunits NuoA, H, J, K, L, M, N constitute the membrane sector of the complex.

Its subcellular location is the cell inner membrane. It catalyses the reaction a quinone + NADH + 5 H(+)(in) = a quinol + NAD(+) + 4 H(+)(out). In terms of biological role, NDH-1 shuttles electrons from NADH, via FMN and iron-sulfur (Fe-S) centers, to quinones in the respiratory chain. The immediate electron acceptor for the enzyme in this species is believed to be ubiquinone. Couples the redox reaction to proton translocation (for every two electrons transferred, four hydrogen ions are translocated across the cytoplasmic membrane), and thus conserves the redox energy in a proton gradient. The polypeptide is NADH-quinone oxidoreductase subunit N 1 (Koribacter versatilis (strain Ellin345)).